A 385-amino-acid polypeptide reads, in one-letter code: Eukaryotic translation initiation factor 3 subunit M (385 aa).

Residues 180–342 (NSELASKVMI…RKVHISSTMH (163 aa)) form the PCI domain.

This sequence belongs to the eIF-3 subunit M family. Component of the eukaryotic translation initiation factor 3 (eIF-3) complex.

Its subcellular location is the cytoplasm. In terms of biological role, component of the eukaryotic translation initiation factor 3 (eIF-3) complex, which is involved in protein synthesis of a specialized repertoire of mRNAs and, together with other initiation factors, stimulates binding of mRNA and methionyl-tRNAi to the 40S ribosome. The eIF-3 complex specifically targets and initiates translation of a subset of mRNAs involved in cell proliferation. The protein is Eukaryotic translation initiation factor 3 subunit M of Anopheles gambiae (African malaria mosquito).